The chain runs to 715 residues: BBSome complex member BBS7 (715 aa).

An N-acetylmethionine modification is found at methionine 1.

As to quaternary structure, part of BBSome complex, that contains BBS1, BBS2, BBS4, BBS5, BBS7, BBS8/TTC8, BBS9 and BBIP10. Interacts with BBS2 (via C-terminus). Interacts with CCDC28B. Interacts with SMO; the interaction is indicative for the association of SMO with the BBsome complex to facilitate ciliary localization of SMO.

It is found in the cell projection. Its subcellular location is the cilium membrane. It localises to the cytoplasm. The protein localises to the cytoskeleton. The protein resides in the microtubule organizing center. It is found in the centrosome. Its subcellular location is the centriolar satellite. It localises to the cilium basal body. The BBSome complex is thought to function as a coat complex required for sorting of specific membrane proteins to the primary cilia. The BBSome complex is required for ciliogenesis but is dispensable for centriolar satellite function. This ciliogenic function is mediated in part by the Rab8 GDP/GTP exchange factor, which localizes to the basal body and contacts the BBSome. Rab8(GTP) enters the primary cilium and promotes extension of the ciliary membrane. Firstly the BBSome associates with the ciliary membrane and binds to RAB3IP/Rabin8, the guanosyl exchange factor (GEF) for Rab8 and then the Rab8-GTP localizes to the cilium and promotes docking and fusion of carrier vesicles to the base of the ciliary membrane. The BBSome complex, together with the LTZL1, controls SMO ciliary trafficking and contributes to the sonic hedgehog (SHH) pathway regulation. Required for BBSome complex ciliary localization but not for the proper complex assembly. In Mus musculus (Mouse), this protein is BBSome complex member BBS7 (Bbs7).